The sequence spans 437 residues: Diaminopimelate decarboxylase (437 aa).

Residue K81 is modified to N6-(pyridoxal phosphate)lysine. Pyridoxal 5'-phosphate-binding positions include G256 and 298–301 (EPGR). The substrate site is built by R301, R337, and Y341. Residue C366 is the Proton donor of the active site. Residues E367 and Y396 each coordinate substrate. Pyridoxal 5'-phosphate is bound at residue Y396.

The protein belongs to the Orn/Lys/Arg decarboxylase class-II family. LysA subfamily. In terms of assembly, homodimer. Pyridoxal 5'-phosphate is required as a cofactor.

It catalyses the reaction meso-2,6-diaminopimelate + H(+) = L-lysine + CO2. Its pathway is amino-acid biosynthesis; L-lysine biosynthesis via DAP pathway; L-lysine from DL-2,6-diaminopimelate: step 1/1. Its function is as follows. Specifically catalyzes the decarboxylation of meso-diaminopimelate (meso-DAP) to L-lysine. The protein is Diaminopimelate decarboxylase of Actinosynnema pretiosum subsp. auranticum.